The primary structure comprises 224 residues: UPF0758 protein PSHAa2643 (224 aa).

Residues 102–224 enclose the MPN domain; that stretch reads IFNSPNAVYD…CVSFAERGLI (123 aa). Positions 173, 175, and 186 each coordinate Zn(2+). The JAMM motif motif lies at 173–186; it reads HNHPSGIAEPSQAD.

It belongs to the UPF0758 family.

The sequence is that of UPF0758 protein PSHAa2643 from Pseudoalteromonas translucida (strain TAC 125).